The sequence spans 399 residues: tRNA-specific 2-thiouridylase MnmA (399 aa).

ATP-binding positions include 18–25 and leucine 44; that span reads AMSGGVDS. Catalysis depends on cysteine 112, which acts as the Nucleophile. Cysteine 112 and cysteine 213 are disulfide-bonded. Glycine 136 is an ATP binding site. The tract at residues 163-165 is interaction with tRNA; the sequence is RDQ. The active-site Cysteine persulfide intermediate is the cysteine 213.

This sequence belongs to the MnmA/TRMU family.

It is found in the cytoplasm. The enzyme catalyses S-sulfanyl-L-cysteinyl-[protein] + uridine(34) in tRNA + AH2 + ATP = 2-thiouridine(34) in tRNA + L-cysteinyl-[protein] + A + AMP + diphosphate + H(+). Its function is as follows. Catalyzes the 2-thiolation of uridine at the wobble position (U34) of tRNA, leading to the formation of s(2)U34. In Rhizobium leguminosarum bv. trifolii (strain WSM2304), this protein is tRNA-specific 2-thiouridylase MnmA.